We begin with the raw amino-acid sequence, 235 residues long: Germin-like protein 1-4 (235 aa).

The signal sequence occupies residues 1 to 27 (MAAKLPTVVLLASFAAVILSLAAPLLA). A disulfide bridge connects residues cysteine 37 and cysteine 55. Asparagine 60 carries an N-linked (GlcNAc...) asparagine glycan. A Cupin type-1 domain is found at 69–226 (PGLGKPADVY…AFQVDGGVVE (158 aa)). Residues histidine 120, histidine 122, glutamate 127, and histidine 171 each contribute to the Mn(2+) site.

This sequence belongs to the germin family. Oligomer (believed to be a pentamer but probably hexamer).

The protein localises to the secreted. Its subcellular location is the extracellular space. The protein resides in the apoplast. Its function is as follows. May play a role in plant defense. Probably has no oxalate oxidase activity even if the active site is conserved. This is Germin-like protein 1-4 from Oryza sativa subsp. japonica (Rice).